The following is a 197-amino-acid chain: NAD(P)H-quinone oxidoreductase subunit 6, chloroplastic (197 aa).

Helical transmembrane passes span 10–30 (FVLA…VLLV), 39–59 (LGLV…DFVA), 60–80 (AAQL…AVMI), 94–114 (IGYI…SFVI), and 147–167 (LLGE…AALV).

This sequence belongs to the complex I subunit 6 family. As to quaternary structure, NDH is composed of at least 16 different subunits, 5 of which are encoded in the nucleus.

It localises to the plastid. The protein resides in the chloroplast thylakoid membrane. The enzyme catalyses a plastoquinone + NADH + (n+1) H(+)(in) = a plastoquinol + NAD(+) + n H(+)(out). It catalyses the reaction a plastoquinone + NADPH + (n+1) H(+)(in) = a plastoquinol + NADP(+) + n H(+)(out). Its function is as follows. NDH shuttles electrons from NAD(P)H:plastoquinone, via FMN and iron-sulfur (Fe-S) centers, to quinones in the photosynthetic chain and possibly in a chloroplast respiratory chain. The immediate electron acceptor for the enzyme in this species is believed to be plastoquinone. Couples the redox reaction to proton translocation, and thus conserves the redox energy in a proton gradient. The sequence is that of NAD(P)H-quinone oxidoreductase subunit 6, chloroplastic (ndhG) from Adiantum capillus-veneris (Maidenhair fern).